A 123-amino-acid chain; its full sequence is Small ribosomal subunit protein uS11 (123 aa).

The protein belongs to the universal ribosomal protein uS11 family. Part of the 30S ribosomal subunit. Interacts with proteins S7 and S18. Binds to IF-3.

Its function is as follows. Located on the platform of the 30S subunit, it bridges several disparate RNA helices of the 16S rRNA. Forms part of the Shine-Dalgarno cleft in the 70S ribosome. This chain is Small ribosomal subunit protein uS11, found in Coxiella burnetii (strain CbuG_Q212) (Coxiella burnetii (strain Q212)).